Reading from the N-terminus, the 81-residue chain is Small cysteine-rich protein 1 2 (81 aa).

An N-terminal signal peptide occupies residues 1–19; that stretch reads MGVNFNICLLLLLVATISS. The propeptide occupies 20 to 39; sequence QPLKATEKDDSTDENPFGIY.

The protein belongs to the Cnidaria small cysteine-rich protein (SCRiP) family. alpha subfamily. In terms of processing, the basic myotoxic domain of rattlesnake crotamine toxins (with 6 Cys residues) has been detected in this protein. However, this protein contains 2 additional Cys at the C-terminal region. Hence, this protein may contain 4 disulfide bonds instead of the 3 suggested by the myotoxin domain.

It localises to the secreted. Its subcellular location is the nematocyst. Induces neurotoxic symptoms on zebrafish. Has also been claimed to be implied in calcification, but tests on homolog proteins suggest that proteins of this family have a neurotoxic function and not a calcification function. The sequence is that of Small cysteine-rich protein 1 2 from Montipora capitata (Rice coral).